The sequence spans 583 residues: Aspartate--tRNA ligase (583 aa).

Position 174 (glutamate 174) interacts with L-aspartate. An aspartate region spans residues 198–201; the sequence is QITK. Position 220 (arginine 220) interacts with L-aspartate. Residues 220-222 and glutamine 229 each bind ATP; that span reads RDE. An L-aspartate-binding site is contributed by histidine 443. Glutamate 477 contributes to the ATP binding site. Residue arginine 484 coordinates L-aspartate. 529–532 provides a ligand contact to ATP; sequence GLDR.

It belongs to the class-II aminoacyl-tRNA synthetase family. Type 1 subfamily. As to quaternary structure, homodimer.

It is found in the cytoplasm. The catalysed reaction is tRNA(Asp) + L-aspartate + ATP = L-aspartyl-tRNA(Asp) + AMP + diphosphate. Functionally, catalyzes the attachment of L-aspartate to tRNA(Asp) in a two-step reaction: L-aspartate is first activated by ATP to form Asp-AMP and then transferred to the acceptor end of tRNA(Asp). The sequence is that of Aspartate--tRNA ligase from Streptococcus agalactiae serotype Ia (strain ATCC 27591 / A909 / CDC SS700).